A 741-amino-acid chain; its full sequence is Nuclear pore complex protein Nup88 (741 aa).

At alanine 2 the chain carries N-acetylalanine. Serine 35, serine 50, serine 379, serine 437, serine 442, and serine 517 each carry phosphoserine. Threonine 525 carries the phosphothreonine modification. At serine 540 the chain carries Phosphoserine. Positions 585-651 form a coiled coil; sequence EEIQRRVKLL…KLLHSFHSEL (67 aa). A Phosphoserine modification is found at serine 698.

As to quaternary structure, interacts with NUP214/CAN. Interacts with NUP62 and NUP98. As to expression, ubiquitous.

The protein resides in the nucleus. It is found in the nuclear pore complex. Its function is as follows. Component of nuclear pore complex. This Homo sapiens (Human) protein is Nuclear pore complex protein Nup88 (NUP88).